The sequence spans 547 residues: Chaperonin GroEL 1 (547 aa).

ATP is bound by residues 30 to 33 (TLGP), Lys51, 87 to 91 (DGTTT), Gly415, 479 to 481 (NAA), and Asp495. Positions 525 to 547 (PKKKGAPAGGGMGGMGGMDEMDY) are disordered. Positions 531–541 (PAGGGMGGMGG) are enriched in gly residues.

It belongs to the chaperonin (HSP60) family. Forms a cylinder of 14 subunits composed of two heptameric rings stacked back-to-back. Interacts with the co-chaperonin GroES.

Its subcellular location is the cytoplasm. The enzyme catalyses ATP + H2O + a folded polypeptide = ADP + phosphate + an unfolded polypeptide.. Functionally, together with its co-chaperonin GroES, plays an essential role in assisting protein folding. The GroEL-GroES system forms a nano-cage that allows encapsulation of the non-native substrate proteins and provides a physical environment optimized to promote and accelerate protein folding. This chain is Chaperonin GroEL 1, found in Anaeromyxobacter sp. (strain Fw109-5).